Here is a 516-residue protein sequence, read N- to C-terminus: Methionine--tRNA ligase (516 aa).

The short motif at 14 to 24 is the 'HIGH' region element; that stretch reads SYPNGKPHIGH. Positions 302-306 match the 'KMSKS' region motif; sequence KMSKS. Lys305 contributes to the ATP binding site.

It belongs to the class-I aminoacyl-tRNA synthetase family. MetG type 2B subfamily. In terms of assembly, monomer.

It localises to the cytoplasm. The catalysed reaction is tRNA(Met) + L-methionine + ATP = L-methionyl-tRNA(Met) + AMP + diphosphate. In terms of biological role, is required not only for elongation of protein synthesis but also for the initiation of all mRNA translation through initiator tRNA(fMet) aminoacylation. The chain is Methionine--tRNA ligase from Rhizobium meliloti (strain 1021) (Ensifer meliloti).